Here is a 482-residue protein sequence, read N- to C-terminus: tRNA sulfurtransferase (482 aa).

The THUMP domain occupies 61–165 (LAIRDALTRI…DDRLLLIKGR (105 aa)). ATP is bound by residues 183–184 (LI), lysine 265, glycine 287, and glutamine 296. Cysteine 344 and cysteine 456 are disulfide-bonded. A Rhodanese domain is found at 404–482 (FGPNDVILDI…GFNNVKVYRP (79 aa)). The Cysteine persulfide intermediate role is filled by cysteine 456.

Belongs to the ThiI family.

The protein localises to the cytoplasm. It carries out the reaction [ThiI sulfur-carrier protein]-S-sulfanyl-L-cysteine + a uridine in tRNA + 2 reduced [2Fe-2S]-[ferredoxin] + ATP + H(+) = [ThiI sulfur-carrier protein]-L-cysteine + a 4-thiouridine in tRNA + 2 oxidized [2Fe-2S]-[ferredoxin] + AMP + diphosphate. The enzyme catalyses [ThiS sulfur-carrier protein]-C-terminal Gly-Gly-AMP + S-sulfanyl-L-cysteinyl-[cysteine desulfurase] + AH2 = [ThiS sulfur-carrier protein]-C-terminal-Gly-aminoethanethioate + L-cysteinyl-[cysteine desulfurase] + A + AMP + 2 H(+). It participates in cofactor biosynthesis; thiamine diphosphate biosynthesis. Functionally, catalyzes the ATP-dependent transfer of a sulfur to tRNA to produce 4-thiouridine in position 8 of tRNAs, which functions as a near-UV photosensor. Also catalyzes the transfer of sulfur to the sulfur carrier protein ThiS, forming ThiS-thiocarboxylate. This is a step in the synthesis of thiazole, in the thiamine biosynthesis pathway. The sulfur is donated as persulfide by IscS. In Escherichia coli O45:K1 (strain S88 / ExPEC), this protein is tRNA sulfurtransferase.